The sequence spans 364 residues: Probable dual-specificity RNA methyltransferase RlmN (364 aa).

The Proton acceptor role is filled by glutamate 107. In terms of domain architecture, Radical SAM core spans 113–346; that stretch reads HEYGNSVCVT…ATIRREQGSD (234 aa). Cysteine 120 and cysteine 351 form a disulfide bridge. Residues cysteine 127, cysteine 131, and cysteine 134 each contribute to the [4Fe-4S] cluster site. Residues 177-178, serine 209, 232-234, and asparagine 308 each bind S-adenosyl-L-methionine; these read GE and SLH. The S-methylcysteine intermediate role is filled by cysteine 351.

The protein belongs to the radical SAM superfamily. RlmN family. It depends on [4Fe-4S] cluster as a cofactor.

Its subcellular location is the cytoplasm. The catalysed reaction is adenosine(2503) in 23S rRNA + 2 reduced [2Fe-2S]-[ferredoxin] + 2 S-adenosyl-L-methionine = 2-methyladenosine(2503) in 23S rRNA + 5'-deoxyadenosine + L-methionine + 2 oxidized [2Fe-2S]-[ferredoxin] + S-adenosyl-L-homocysteine. It catalyses the reaction adenosine(37) in tRNA + 2 reduced [2Fe-2S]-[ferredoxin] + 2 S-adenosyl-L-methionine = 2-methyladenosine(37) in tRNA + 5'-deoxyadenosine + L-methionine + 2 oxidized [2Fe-2S]-[ferredoxin] + S-adenosyl-L-homocysteine. Its function is as follows. Specifically methylates position 2 of adenine 2503 in 23S rRNA and position 2 of adenine 37 in tRNAs. Confers resistance to some classes of antibiotics. The chain is Probable dual-specificity RNA methyltransferase RlmN from Staphylococcus epidermidis (strain ATCC 35984 / DSM 28319 / BCRC 17069 / CCUG 31568 / BM 3577 / RP62A).